The chain runs to 112 residues: MSAEVPEAASAEEQKEMEDKVTSPEKAEEAKLKARYPHLGQKPGGSDFLRKRLQKGQKYFDSGDYNMAKAKMKNKQLPTATPDKTEVTGDHIPTPQDLPQRKPSLVASKLAG.

N-acetylmethionine is present on Met1. The segment covering 1 to 11 (MSAEVPEAASA) has biased composition (low complexity). Residues 1 to 49 (MSAEVPEAASAEEQKEMEDKVTSPEKAEEAKLKARYPHLGQKPGGSDFL) are disordered. Ser2 carries the post-translational modification N-acetylserine. 2 positions are modified to phosphoserine: Ser2 and Ser23. Over residues 12 to 32 (EEQKEMEDKVTSPEKAEEAKL) the composition is skewed to basic and acidic residues. Ser62 and Ser104 each carry phosphoserine; by GWL. Positions 72 to 112 (MKNKQLPTATPDKTEVTGDHIPTPQDLPQRKPSLVASKLAG) are disordered. A Phosphoserine; by PKA modification is found at Ser104. Lys109 is subject to N6-acetyllysine.

As to quaternary structure, interacts (when phosphorylated at Ser-62) with PPP2R2D. Interacts with SNCA. Interacts with PPP2R2A; the interaction is direct and this interaction inhibits PP2A activity. Phosphorylation at Ser-62 by MASTL/GWL during mitosis is essential for interaction with PPP2R2D (PR55-delta) and subsequent inactivation of PP2A. Phosphorylated by PKA. Isoform ARPP-19 is found in all brain regions and also present in non-neuronal tissues. Isoform ARPP-16 is enriched in the caudate nucleus, found in low levels in cerebral cortex.

The protein resides in the cytoplasm. Functionally, protein phosphatase inhibitor that specifically inhibits protein phosphatase 2A (PP2A) during mitosis. Inhibition of PP2A is enhanced when ARPP19 is phosphorylated. When phosphorylated at Ser-62 during mitosis, specifically interacts with PPP2R2D (PR55-delta) and inhibits its activity, leading to inactivation of PP2A, an essential condition to keep cyclin-B1-CDK1 activity high during M phase. May indirectly enhance GAP-43 expression. The protein is cAMP-regulated phosphoprotein 19 (ARPP19) of Bos taurus (Bovine).